Consider the following 360-residue polypeptide: Nucleoporin SEH1 (360 aa).

6 WD repeats span residues 10–49, 55–96, 111–152, 160–210, 217–258, and 276–315; these read DHKDLIHDVSFDFHGRRMATCSSDQSVKVWDKSESGDWHC, THSG…SNDK, DSRT…NLSQ, SCKL…RKYA, TVTD…KELT, and NHNSQVWRVSWNITGTVLASSGDDGCVRLWKANYMDNWKC. Lys12 is covalently cross-linked (Glycyl lysine isopeptide (Lys-Gly) (interchain with G-Cter in SUMO2)). Phosphoserine occurs at positions 179 and 190. The span at 324-354 shows a compositional bias: polar residues; it reads SPVNGSSQQGTSNPSLGSNIPSLQNSLNGSS. The disordered stretch occupies residues 324–360; that stretch reads SPVNGSSQQGTSNPSLGSNIPSLQNSLNGSSAGRKHS.

Belongs to the WD repeat SEC13 family. As to quaternary structure, component of the Nup107-160 subcomplex of the nuclear pore complex (NPC). The Nup107-160 subcomplex includes NUP160, NUP133, NUP107, NUP98, NUP85, NUP43, NUP37, SEH1 and SEC13. The SEH1 subunit appears to be only weakly associated with the Nup107-160 subcomplex. Component of the GATOR2 subcomplex, composed of MIOS, SEC13, SEH1L, WDR24 and WDR59. The GATOR2 complex interacts with CASTOR1 and CASTOR2; the interaction is negatively regulated by arginine. The GATOR2 complex interacts with SESN1, SESN2 and SESN3; the interaction is negatively regulated by amino acids. SESN1, SESN2 and SESN3 convey leucine availability via direct interaction with SEH1L and WDR24.

The protein localises to the chromosome. It localises to the centromere. The protein resides in the kinetochore. It is found in the nucleus. Its subcellular location is the nuclear pore complex. The protein localises to the lysosome membrane. Its activity is regulated as follows. The GATOR2 complex is negatively regulated by the upstream amino acid sensors CASTOR1 and SESN2, which sequester the GATOR2 complex in absence of amino acids. In the presence of abundant amino acids, GATOR2 is released from CASTOR1 and SESN2 and activated. In terms of biological role, component of the Nup107-160 subcomplex of the nuclear pore complex (NPC). The Nup107-160 subcomplex is required for the assembly of a functional NPC. The Nup107-160 subcomplex is also required for normal kinetochore microtubule attachment, mitotic progression and chromosome segregation. This subunit plays a role in recruitment of the Nup107-160 subcomplex to the kinetochore. Functionally, as a component of the GATOR2 complex, functions as an activator of the amino acid-sensing branch of the mTORC1 signaling pathway. The GATOR2 complex indirectly activates mTORC1 through the inhibition of the GATOR1 subcomplex. GATOR2 probably acts as an E3 ubiquitin-protein ligase toward GATOR1. In the presence of abundant amino acids, the GATOR2 complex mediates ubiquitination of the NPRL2 core component of the GATOR1 complex, leading to GATOR1 inactivation. In the absence of amino acids, GATOR2 is inhibited, activating the GATOR1 complex. Within the GATOR2 complex, SEC13 and SEH1L are required to stabilize the complex. The protein is Nucleoporin SEH1 (SEH1L) of Pongo abelii (Sumatran orangutan).